The sequence spans 115 residues: NADH-ubiquinone oxidoreductase chain 3 (115 aa).

3 helical membrane passes run 4 to 24 (LITM…AFWL), 55 to 75 (FFLV…LLPL), and 87 to 107 (TMMV…YEWL).

The protein belongs to the complex I subunit 3 family. Core subunit of respiratory chain NADH dehydrogenase (Complex I) which is composed of 45 different subunits. Interacts with TMEM186. Interacts with TMEM242.

It localises to the mitochondrion inner membrane. The enzyme catalyses a ubiquinone + NADH + 5 H(+)(in) = a ubiquinol + NAD(+) + 4 H(+)(out). Functionally, core subunit of the mitochondrial membrane respiratory chain NADH dehydrogenase (Complex I) which catalyzes electron transfer from NADH through the respiratory chain, using ubiquinone as an electron acceptor. Essential for the catalytic activity of complex I. The chain is NADH-ubiquinone oxidoreductase chain 3 from Notiomys edwardsii (Edwards's long-clawed mouse).